A 419-amino-acid chain; its full sequence is MASAFSKLLTGRNASLLFTTLGTSALTTGYLLNRQKVSADAREQHKLFPPSADYPDLRKHNNCMAECLTPTIYAKLRNKMTPSGYTLDQCIQTGVDNPGHPFIKTVGMVAGDEESYEVFADLFDPVIKLRHNGYDPRLMKHPADLDASKITHGQFDERYVLSSRVRTGRSIRGLSLPPACSRAERREVENVAITALGGLKGDLAGRYYKLSEMTEQDQQRLIDDHFLFDKPVSPLLTCAGMARDWPDARGIWHNYDKTFLIWINEEDHTRVISMEKGGNMKRVFERFCRGLKEVERLIQERGWEFMWNERLGYILTCPSNLGTGLRAGVHVRIPKLSKDPRFSKILENLRLQKRGTGGVDTAAVADVYDISNIDRIGRSEVELVQIVIDGVNYLVDCEKKLERGQDIKVPPPLPQFGRK.

The transit peptide at 1 to 39 directs the protein to the mitochondrion; sequence MASAFSKLLTGRNASLLFTTLGTSALTTGYLLNRQKVSA. The tract at residues 40-64 is cardiolipin-binding; it reads DAREQHKLFPPSADYPDLRKHNNCM. The Phosphagen kinase N-terminal domain occupies 46–132; that stretch reads KLFPPSADYP…FDPVIKLRHN (87 aa). The Phosphagen kinase C-terminal domain occupies 159–401; that stretch reads YVLSSRVRTG…NYLVDCEKKL (243 aa). ATP is bound by residues 162–166 and His-225; that span reads SSRVR. Tyr-255 bears the Phosphotyrosine mark. ATP contacts are provided by residues Arg-270, Arg-326, 354 to 359, and Asp-369; that span reads RGTGGV. Thr-356 bears the Phosphothreonine mark.

It belongs to the ATP:guanido phosphotransferase family. In terms of assembly, exists as an octamer composed of four CKMT2 homodimers. As to expression, sarcomere-specific. Found only in heart and skeletal muscles.

Its subcellular location is the mitochondrion inner membrane. The enzyme catalyses creatine + ATP = N-phosphocreatine + ADP + H(+). Its function is as follows. Reversibly catalyzes the transfer of phosphate between ATP and various phosphogens (e.g. creatine phosphate). Creatine kinase isoenzymes play a central role in energy transduction in tissues with large, fluctuating energy demands, such as skeletal muscle, heart, brain and spermatozoa. This chain is Creatine kinase S-type, mitochondrial (Ckmt2), found in Rattus norvegicus (Rat).